The following is a 197-amino-acid chain: Imidazoleglycerol-phosphate dehydratase (197 aa).

The protein belongs to the imidazoleglycerol-phosphate dehydratase family.

The protein resides in the cytoplasm. It carries out the reaction D-erythro-1-(imidazol-4-yl)glycerol 3-phosphate = 3-(imidazol-4-yl)-2-oxopropyl phosphate + H2O. Its pathway is amino-acid biosynthesis; L-histidine biosynthesis; L-histidine from 5-phospho-alpha-D-ribose 1-diphosphate: step 6/9. This chain is Imidazoleglycerol-phosphate dehydratase, found in Gloeobacter violaceus (strain ATCC 29082 / PCC 7421).